Consider the following 1357-residue polypeptide: DNA-directed RNA polymerase subunit beta (1357 aa).

This sequence belongs to the RNA polymerase beta chain family. In terms of assembly, the RNAP catalytic core consists of 2 alpha, 1 beta, 1 beta' and 1 omega subunit. When a sigma factor is associated with the core the holoenzyme is formed, which can initiate transcription.

It carries out the reaction RNA(n) + a ribonucleoside 5'-triphosphate = RNA(n+1) + diphosphate. Its function is as follows. DNA-dependent RNA polymerase catalyzes the transcription of DNA into RNA using the four ribonucleoside triphosphates as substrates. The chain is DNA-directed RNA polymerase subunit beta from Pseudomonas fluorescens (strain ATCC BAA-477 / NRRL B-23932 / Pf-5).